Reading from the N-terminus, the 618-residue chain is Isocitrate dehydrogenase kinase/phosphatase (618 aa).

Residues 332–338 and Lys353 each bind ATP; that span reads APGIKGM. Asp388 is an active-site residue.

The protein belongs to the AceK family.

The protein localises to the cytoplasm. It carries out the reaction L-seryl-[isocitrate dehydrogenase] + ATP = O-phospho-L-seryl-[isocitrate dehydrogenase] + ADP + H(+). Functionally, bifunctional enzyme which can phosphorylate or dephosphorylate isocitrate dehydrogenase (IDH) on a specific serine residue. This is a regulatory mechanism which enables bacteria to bypass the Krebs cycle via the glyoxylate shunt in response to the source of carbon. When bacteria are grown on glucose, IDH is fully active and unphosphorylated, but when grown on acetate or ethanol, the activity of IDH declines drastically concomitant with its phosphorylation. This chain is Isocitrate dehydrogenase kinase/phosphatase, found in Methylibium petroleiphilum (strain ATCC BAA-1232 / LMG 22953 / PM1).